The sequence spans 480 residues: Proline--tRNA ligase (480 aa).

The protein belongs to the class-II aminoacyl-tRNA synthetase family. ProS type 3 subfamily. In terms of assembly, homodimer.

The protein localises to the cytoplasm. The enzyme catalyses tRNA(Pro) + L-proline + ATP = L-prolyl-tRNA(Pro) + AMP + diphosphate. Its function is as follows. Catalyzes the attachment of proline to tRNA(Pro) in a two-step reaction: proline is first activated by ATP to form Pro-AMP and then transferred to the acceptor end of tRNA(Pro). The chain is Proline--tRNA ligase from Methanosarcina mazei (strain ATCC BAA-159 / DSM 3647 / Goe1 / Go1 / JCM 11833 / OCM 88) (Methanosarcina frisia).